Here is a 655-residue protein sequence, read N- to C-terminus: Putative esterase (655 aa).

Residues 9-29 traverse the membrane as a helical segment; the sequence is VLSLTLIYISISIGFSVYFYV. 7 N-linked (GlcNAc...) asparagine; by host glycosylation sites follow: Asn71, Asn89, Asn101, Asn185, Asn386, Asn449, and Asn512. The active-site Charge relay system is His515. N-linked (GlcNAc...) asparagine; by host glycosylation is found at Asn527 and Asn597.

The protein belongs to the type-B carboxylesterase/lipase family.

The protein localises to the membrane. The catalysed reaction is a carboxylic ester + H2O = an alcohol + a carboxylate + H(+). The polypeptide is Putative esterase (Noctuidae (owlet moths)).